Consider the following 245-residue polypeptide: 1-(5-phosphoribosyl)-5-[(5-phosphoribosylamino)methylideneamino] imidazole-4-carboxamide isomerase (245 aa).

Aspartate 7 functions as the Proton acceptor in the catalytic mechanism. The Proton donor role is filled by aspartate 129.

Belongs to the HisA/HisF family.

The protein localises to the cytoplasm. It carries out the reaction 1-(5-phospho-beta-D-ribosyl)-5-[(5-phospho-beta-D-ribosylamino)methylideneamino]imidazole-4-carboxamide = 5-[(5-phospho-1-deoxy-D-ribulos-1-ylimino)methylamino]-1-(5-phospho-beta-D-ribosyl)imidazole-4-carboxamide. Its pathway is amino-acid biosynthesis; L-histidine biosynthesis; L-histidine from 5-phospho-alpha-D-ribose 1-diphosphate: step 4/9. The chain is 1-(5-phosphoribosyl)-5-[(5-phosphoribosylamino)methylideneamino] imidazole-4-carboxamide isomerase from Idiomarina loihiensis (strain ATCC BAA-735 / DSM 15497 / L2-TR).